A 419-amino-acid chain; its full sequence is AT-hook motif nuclear-localized protein 4 (419 aa).

Disordered regions lie at residues 1–168, 301–337, and 382–419; these read MEER…SGGG, QQQQ…DPKA, and DLFS…EVPS. A Bipartite nuclear localization signal motif is present at residues 78–86; the sequence is KKKRGRPRK. The segment at residues 78–90 is a DNA-binding region (a.T hook); that stretch reads KKKRGRPRKYNPD. Positions 101–112 are enriched in polar residues; sequence PISSSVPLTSEF. The segment covering 115-130 has biased composition (basic residues); the sequence is RKRGRGRGRGRGRGRG. Residues 136–148 show a composition bias toward low complexity; that stretch reads GSREPNNNNNDNN. The PPC domain maps to 174 to 314; that stretch reads VSPSFTPHVL…QQIKKQRRER (141 aa). Polar residues predominate over residues 318-328; sequence PTTTQASNISF. Residues 391–406 are compositionally biased toward acidic residues; that stretch reads DREEDEDDLEGEDDEE.

As to quaternary structure, homodimer. Interacts with AHL3. Predominantly expressed in the stele of the root meristem with a specificity to the procambium.

The protein localises to the nucleus. Functionally, transcription factor that specifically binds AT-rich DNA sequences related to the nuclear matrix attachment regions (MARs). Acts redundantly with AHL3 to regulate the formation of tissue boundary between the xylem and procambium in the root meristem. Cell-to-cell movement of AHL4 from the procambium to the xylem is critical for its function in root vascular patterning. The protein is AT-hook motif nuclear-localized protein 4 of Arabidopsis thaliana (Mouse-ear cress).